A 401-amino-acid chain; its full sequence is Imidazolonepropionase (401 aa).

Fe(3+)-binding residues include H66 and H68. Residues H66 and H68 each contribute to the Zn(2+) site. 4-imidazolone-5-propanoate contacts are provided by R75, Y138, and H171. Position 138 (Y138) interacts with N-formimidoyl-L-glutamate. Residue H236 participates in Fe(3+) binding. H236 is a binding site for Zn(2+). Q239 contacts 4-imidazolone-5-propanoate. D311 serves as a coordination point for Fe(3+). A Zn(2+)-binding site is contributed by D311. 2 residues coordinate N-formimidoyl-L-glutamate: N313 and G315. T316 serves as a coordination point for 4-imidazolone-5-propanoate.

It belongs to the metallo-dependent hydrolases superfamily. HutI family. Zn(2+) serves as cofactor. The cofactor is Fe(3+).

The protein resides in the cytoplasm. The catalysed reaction is 4-imidazolone-5-propanoate + H2O = N-formimidoyl-L-glutamate. It participates in amino-acid degradation; L-histidine degradation into L-glutamate; N-formimidoyl-L-glutamate from L-histidine: step 3/3. Catalyzes the hydrolytic cleavage of the carbon-nitrogen bond in imidazolone-5-propanoate to yield N-formimidoyl-L-glutamate. It is the third step in the universal histidine degradation pathway. The chain is Imidazolonepropionase from Acinetobacter baumannii (strain AB0057).